The sequence spans 173 residues: Translation initiation factor IF-3 (173 aa).

Belongs to the IF-3 family. In terms of assembly, monomer.

The protein resides in the cytoplasm. IF-3 binds to the 30S ribosomal subunit and shifts the equilibrium between 70S ribosomes and their 50S and 30S subunits in favor of the free subunits, thus enhancing the availability of 30S subunits on which protein synthesis initiation begins. This chain is Translation initiation factor IF-3, found in Neisseria gonorrhoeae (strain ATCC 700825 / FA 1090).